The following is a 163-amino-acid chain: Nucleotide-binding protein Acel_0286 (163 aa).

This sequence belongs to the YajQ family.

In terms of biological role, nucleotide-binding protein. The sequence is that of Nucleotide-binding protein Acel_0286 from Acidothermus cellulolyticus (strain ATCC 43068 / DSM 8971 / 11B).